Reading from the N-terminus, the 637-residue chain is Chaperone protein DnaK (637 aa).

T198 is subject to Phosphothreonine; by autocatalysis. The interval 597–637 is disordered; the sequence is MYAKTSQAGAGPQPGAGPGTGGQGPGKKDEDVVDADFEEVK. Over residues 608-621 the composition is skewed to gly residues; the sequence is PQPGAGPGTGGQGP. Over residues 627–637 the composition is skewed to acidic residues; it reads DVVDADFEEVK.

This sequence belongs to the heat shock protein 70 family.

Its function is as follows. Acts as a chaperone. In Syntrophus aciditrophicus (strain SB), this protein is Chaperone protein DnaK.